The following is a 609-amino-acid chain: NADH-ubiquinone oxidoreductase chain 5 (609 aa).

Transmembrane regions (helical) follow at residues 3–23, 46–66, 90–110, 115–135, 140–160, 174–194, 216–236, 244–264, 276–296, 304–323, 328–350, 368–388, 410–432, 460–480, 485–505, and 585–605; these read VINL…LPIV, AFMI…EMII, MIFV…SMWY, PFIN…MILV, LFQL…LIGW, AVLY…WFLI, LMGL…HPWL, TPVS…FLLI, MQTT…ICAL, IIAF…IGIN, AFLH…GSII, VLPF…GMPF, WALL…IMFF, LLLG…PTST, MPYY…ILAL, and GLIK…LMMI.

This sequence belongs to the complex I subunit 5 family.

It localises to the mitochondrion inner membrane. It carries out the reaction a ubiquinone + NADH + 5 H(+)(in) = a ubiquinol + NAD(+) + 4 H(+)(out). Its function is as follows. Core subunit of the mitochondrial membrane respiratory chain NADH dehydrogenase (Complex I) that is believed to belong to the minimal assembly required for catalysis. Complex I functions in the transfer of electrons from NADH to the respiratory chain. The immediate electron acceptor for the enzyme is believed to be ubiquinone. The protein is NADH-ubiquinone oxidoreductase chain 5 (MT-ND5) of Phoca vitulina (Harbor seal).